A 243-amino-acid polypeptide reads, in one-letter code: 4-hydroxy-tetrahydrodipicolinate reductase (243 aa).

Residues 9-14 (GANGKM), 78-80 (GTS), and 104-107 (APNF) each bind NAD(+). Catalysis depends on His-134, which acts as the Proton donor/acceptor. His-135 serves as a coordination point for (S)-2,3,4,5-tetrahydrodipicolinate. Residue Lys-138 is the Proton donor of the active site. A (S)-2,3,4,5-tetrahydrodipicolinate-binding site is contributed by 144-145 (GT).

It belongs to the DapB family.

The protein localises to the cytoplasm. The catalysed reaction is (S)-2,3,4,5-tetrahydrodipicolinate + NAD(+) + H2O = (2S,4S)-4-hydroxy-2,3,4,5-tetrahydrodipicolinate + NADH + H(+). It catalyses the reaction (S)-2,3,4,5-tetrahydrodipicolinate + NADP(+) + H2O = (2S,4S)-4-hydroxy-2,3,4,5-tetrahydrodipicolinate + NADPH + H(+). The protein operates within amino-acid biosynthesis; L-lysine biosynthesis via DAP pathway; (S)-tetrahydrodipicolinate from L-aspartate: step 4/4. Catalyzes the conversion of 4-hydroxy-tetrahydrodipicolinate (HTPA) to tetrahydrodipicolinate. The chain is 4-hydroxy-tetrahydrodipicolinate reductase from Legionella pneumophila (strain Corby).